The following is a 122-amino-acid chain: Large ribosomal subunit protein uL14c (122 aa).

The protein belongs to the universal ribosomal protein uL14 family. In terms of assembly, part of the 50S ribosomal subunit.

The protein localises to the plastid. The protein resides in the chloroplast. In terms of biological role, binds to 23S rRNA. This Gnetum parvifolium (Small-leaved jointfir) protein is Large ribosomal subunit protein uL14c.